Reading from the N-terminus, the 307-residue chain is MTFNDKLQAYIQLTRFDKPVGIELLLWPTLWGVLFAAMGQAQQQGEGVTAGLPSLSIFVVFALGAILMRAAGCAINDFADRKVDGHVSRTKGRPLADGRLSAKEAIAAFLVLVLLSASLLLFLPIQVFYWSFAAVILAFIYPFMKRYTHLPQVFLAAAFGWAIPMAYVAIQGAADIWCWLLFLAYMCWTVAYDTQYAMADRDDDVKIGVKSTAILFGRYDVIIISLLQILFLVIMGAVMWHYFVPTSLGITPVFGLALVAMMFAKQNSACASRNALACFQAFLANIWVGRYVFALIAIACVWTTFNG.

The next 9 membrane-spanning stretches (helical) occupy residues 19–39, 48–68, 105–125, 127–147, 150–170, 172–192, 221–241, 243–263, and 282–302; these read PVGI…AAMG, VTAG…AILM, AIAA…FLPI, VFYW…MKRY, LPQV…YVAI, GAAD…TVAY, VIII…VMWH, FVPT…AMMF, and FLAN…ACVW.

This sequence belongs to the UbiA prenyltransferase family. Mg(2+) serves as cofactor.

It localises to the cell inner membrane. The enzyme catalyses all-trans-octaprenyl diphosphate + 4-hydroxybenzoate = 4-hydroxy-3-(all-trans-octaprenyl)benzoate + diphosphate. It functions in the pathway cofactor biosynthesis; ubiquinone biosynthesis. Its function is as follows. Catalyzes the prenylation of para-hydroxybenzoate (PHB) with an all-trans polyprenyl group. Mediates the second step in the final reaction sequence of ubiquinone-8 (UQ-8) biosynthesis, which is the condensation of the polyisoprenoid side chain with PHB, generating the first membrane-bound Q intermediate 3-octaprenyl-4-hydroxybenzoate. The polypeptide is 4-hydroxybenzoate octaprenyltransferase (Psychrobacter arcticus (strain DSM 17307 / VKM B-2377 / 273-4)).